Consider the following 941-residue polypeptide: Ankyrin repeat and MYND domain-containing protein 1 (941 aa).

MORN repeat units follow at residues 2-24 (YQGE…TGES), 25-47 (YHGQ…DGSS), and 70-92 (FQGL…DGSQ). ANK repeat units follow at residues 292-321 (KGYT…DVNK), 513-542 (MRRM…DPNL), 545-574 (VPMQ…RTDI), 581-613 (STLT…DVDA), 657-691 (GGRT…NPNL), 694-723 (SGHS…DPNL), and 737-766 (CDLT…DILK). Zn(2+) contacts are provided by C880, C883, C894, C897, C903, C907, H916, and C920. Residues 880–920 (CYQCGRSIGVRLLPCPRCYGILTCSKYCKTKAWTEFHKKDC) form an MYND-type zinc finger.

This is Ankyrin repeat and MYND domain-containing protein 1 (ANKMY1) from Homo sapiens (Human).